The chain runs to 286 residues: Beta-lactamase SHV-5 (286 aa).

The first 21 residues, 1-21, serve as a signal peptide directing secretion; that stretch reads MRYIRLCIISLLATLPLAVHA. The active-site Acyl-ester intermediate is the serine 66. An intrachain disulfide couples cysteine 73 to cysteine 119. Residue glutamate 164 is the Proton acceptor of the active site. 230-232 is a substrate binding site; sequence KTG.

It belongs to the class-A beta-lactamase family.

It carries out the reaction a beta-lactam + H2O = a substituted beta-amino acid. SHV enzymes hydrolyze broad spectrum cephalosporins notably cefotaxime and ceftazidime. SHV-5 causes particularly high levels of resistance to aztreonam and ceftazidime. The sequence is that of Beta-lactamase SHV-5 (bla) from Klebsiella pneumoniae.